Consider the following 724-residue polypeptide: RINT1-like protein (724 aa).

One can recognise an RINT1/TIP20 domain in the interval 163 to 724; it reads RLHAVQAQSL…LERRMDIKMF (562 aa).

This sequence belongs to the RINT1 family.

In terms of biological role, during cytokinesis in male meiotic cells, required for completion of cleavage furrow ingression possibly in conjunction with Zw10. Required for maintenance of Golgi stack number and morphology. Essential for acroblast assembly. The chain is RINT1-like protein from Drosophila melanogaster (Fruit fly).